The chain runs to 501 residues: MEFSVKSGNPEKQRSACIVVGVFEPRRLSGVAEQLDKVSDGYLSNLLRRGDLEGKSGQVLLLHHVPNILAERVLLVGCGKERELDERQYRQIIARTMNTLNETGSMEAVCFLSELHVKGRDTYWKVRQAVESARATLYNFNELKSKKEEPRRPLRKLVFNVPSRKELALGEQAVQHALAVATGMDICRNVANMPPNICTPRYLADQAKLMADNYDNLTVATVEEAEMEKLGMNAYLAVGRGSEHESVLTLMHYKGAADDQAPIVLVGKGLTFDSGGISIKPSANMDEMKYDMGGAAGVLGAMQALAELQLPINVIGTVAGCENMPDGKAYRPGDILTTMSGQTVEVLNTDAEGRLVLCDTLTYIERFEPESVIDLATLTGACVIALGSHASAVLSQHNPLAHEILNAAQQSGDKAWRMPLWDEYQSMLDSPFADMANIGGREAGTITAACFLSRYTKKYNWAHMDIAGTAWQGGKDKGSTGRPVPLLTQFLINRCNTEAAE.

Mn(2+)-binding residues include K268 and D273. Residue K280 is part of the active site. Residues D291, D350, and E352 each contribute to the Mn(2+) site. The active site involves R354.

It belongs to the peptidase M17 family. Mn(2+) serves as cofactor.

The protein localises to the cytoplasm. It catalyses the reaction Release of an N-terminal amino acid, Xaa-|-Yaa-, in which Xaa is preferably Leu, but may be other amino acids including Pro although not Arg or Lys, and Yaa may be Pro. Amino acid amides and methyl esters are also readily hydrolyzed, but rates on arylamides are exceedingly low.. It carries out the reaction Release of an N-terminal amino acid, preferentially leucine, but not glutamic or aspartic acids.. Presumably involved in the processing and regular turnover of intracellular proteins. Catalyzes the removal of unsubstituted N-terminal amino acids from various peptides. The sequence is that of Probable cytosol aminopeptidase from Idiomarina loihiensis (strain ATCC BAA-735 / DSM 15497 / L2-TR).